Here is a 339-residue protein sequence, read N- to C-terminus: Anthranilate phosphoribosyltransferase (339 aa).

Residues G81, 84–85, S89, 91–94, 109–117, and A121 each bind 5-phospho-alpha-D-ribose 1-diphosphate; these read GD, NVSS, and KHGNRALSS. Position 81 (G81) interacts with anthranilate. Residue S93 participates in Mg(2+) binding. Position 112 (N112) interacts with anthranilate. Residue R167 participates in anthranilate binding. The Mg(2+) site is built by D225 and E226.

This sequence belongs to the anthranilate phosphoribosyltransferase family. In terms of assembly, homodimer. It depends on Mg(2+) as a cofactor.

It carries out the reaction N-(5-phospho-beta-D-ribosyl)anthranilate + diphosphate = 5-phospho-alpha-D-ribose 1-diphosphate + anthranilate. The protein operates within amino-acid biosynthesis; L-tryptophan biosynthesis; L-tryptophan from chorismate: step 2/5. Catalyzes the transfer of the phosphoribosyl group of 5-phosphorylribose-1-pyrophosphate (PRPP) to anthranilate to yield N-(5'-phosphoribosyl)-anthranilate (PRA). The sequence is that of Anthranilate phosphoribosyltransferase from Brucella suis biovar 1 (strain 1330).